The sequence spans 269 residues: MPELPEVETSRRGIEPHLVGATILHAHIRNGRLRWPVSDEIYRLSDTPVLSVQRRAKYLLLELPDGWIIIHLGMSGSLRILPEALPAEKHDHVDLVMSNGKILRYTDPRRFGAWLWTKELEGHNVLAHLGPEPLSDEFNGEYLQQKCAKKKTAIKPWLMDNKLVVGVGNIYASESLFAAGIHPDRLASSLSTEECDLLARVIKAVLLRSIEQGGTTLKDFPQSDGKPGYFAQELQVYGRKGEPCRVCGTPIVATKHAQRATFYCRHCQK.

Proline 2 acts as the Schiff-base intermediate with DNA in catalysis. Glutamate 3 acts as the Proton donor in catalysis. Lysine 57 acts as the Proton donor; for beta-elimination activity in catalysis. Residues histidine 90, arginine 109, and lysine 150 each coordinate DNA. The FPG-type zinc-finger motif lies at 235–269 (QVYGRKGEPCRVCGTPIVATKHAQRATFYCRHCQK). Catalysis depends on arginine 259, which acts as the Proton donor; for delta-elimination activity.

This sequence belongs to the FPG family. As to quaternary structure, monomer. Requires Zn(2+) as cofactor.

It carries out the reaction Hydrolysis of DNA containing ring-opened 7-methylguanine residues, releasing 2,6-diamino-4-hydroxy-5-(N-methyl)formamidopyrimidine.. It catalyses the reaction 2'-deoxyribonucleotide-(2'-deoxyribose 5'-phosphate)-2'-deoxyribonucleotide-DNA = a 3'-end 2'-deoxyribonucleotide-(2,3-dehydro-2,3-deoxyribose 5'-phosphate)-DNA + a 5'-end 5'-phospho-2'-deoxyribonucleoside-DNA + H(+). Its function is as follows. Involved in base excision repair of DNA damaged by oxidation or by mutagenic agents. Acts as a DNA glycosylase that recognizes and removes damaged bases. Has a preference for oxidized purines, such as 7,8-dihydro-8-oxoguanine (8-oxoG). Has AP (apurinic/apyrimidinic) lyase activity and introduces nicks in the DNA strand. Cleaves the DNA backbone by beta-delta elimination to generate a single-strand break at the site of the removed base with both 3'- and 5'-phosphates. This chain is Formamidopyrimidine-DNA glycosylase, found in Salmonella paratyphi C (strain RKS4594).